The chain runs to 690 residues: Ligand of Numb protein X 2 (690 aa).

The segment at Cys-50–Arg-88 adopts an RING-type zinc-finger fold. The disordered stretch occupies residues Ser-198–Leu-224. Residues Asn-208–Phe-211 carry the NPXY motif motif. 4 consecutive PDZ domains span residues Thr-233 to Arg-318, Gln-339 to Gly-422, His-468 to Glu-554, and Asp-600 to Ser-688. Residues Ile-418–His-455 are disordered.

In terms of assembly, interacts with the phosphotyrosine interaction domain of NUMB.

This is Ligand of Numb protein X 2 (LNX2) from Homo sapiens (Human).